The chain runs to 94 residues: Large ribosomal subunit protein bL25 (94 aa).

The protein belongs to the bacterial ribosomal protein bL25 family. As to quaternary structure, part of the 50S ribosomal subunit; part of the 5S rRNA/L5/L18/L25 subcomplex. Contacts the 5S rRNA. Binds to the 5S rRNA independently of L5 and L18.

Functionally, this is one of the proteins that binds to the 5S RNA in the ribosome where it forms part of the central protuberance. This Escherichia coli (strain K12 / DH10B) protein is Large ribosomal subunit protein bL25.